We begin with the raw amino-acid sequence, 66 residues long: Cold shock protein CspB (66 aa).

Residues 4–63 form the CSD domain; that stretch reads GKVKWFNNEKGYGFIEVEGGSDVFVHFTAIQGEGFKTLEEGQEVSFEIVQGNRGPQAANV.

In terms of assembly, homodimer.

It localises to the cytoplasm. Its function is as follows. Affects cell viability at low temperatures. The sequence is that of Cold shock protein CspB (cspB) from Bacillus caldolyticus.